The chain runs to 116 residues: Dynein light chain Tctex-type 3 (116 aa).

Tyr-4 bears the 3'-nitrotyrosine mark.

It belongs to the dynein light chain Tctex-type family. Homodimer. The cytoplasmic dynein 1 complex consists of two catalytic heavy chains (HCs) and a number of non-catalytic subunits presented by intermediate chains (ICs), light intermediate chains (LICs) and light chains (LCs); the composition seems to vary in respect to the IC, LIC and LC composition. The heavy chain homodimer serves as a scaffold for the probable homodimeric assembly of the respective non-catalytic subunits. The ICs and LICs bind directly to the HC dimer and the LCs assemble on the IC dimer. DYNLT1 and DYNLT3 compete for association with dynein IC (DYNC1I1 or DYNC1I2). Self-associates. Interacts with DYNC1I1 and DYNC1I2. Interacts with BUB3. Interacts with SATB1 in nucleus to form complex with matrix attachment regions (MARs) of DNA.

The protein localises to the nucleus. It localises to the cytoplasm. Its subcellular location is the cytoskeleton. It is found in the chromosome. The protein resides in the centromere. The protein localises to the kinetochore. Functionally, acts as one of several non-catalytic accessory components of the cytoplasmic dynein 1 complex that are thought to be involved in linking dynein to cargos and to adapter proteins that regulate dynein function. Cytoplasmic dynein 1 acts as a motor for the intracellular retrograde motility of vesicles and organelles along microtubules. Probably binds BUB3 as part of transport cargo. Required for the efficient progression through mitosis. This is Dynein light chain Tctex-type 3 (DYNLT3) from Ovis aries (Sheep).